A 440-amino-acid polypeptide reads, in one-letter code: UDP-N-acetylmuramoylalanine--D-glutamate ligase (440 aa).

112–118 (GSNGKST) lines the ATP pocket.

This sequence belongs to the MurCDEF family.

Its subcellular location is the cytoplasm. It carries out the reaction UDP-N-acetyl-alpha-D-muramoyl-L-alanine + D-glutamate + ATP = UDP-N-acetyl-alpha-D-muramoyl-L-alanyl-D-glutamate + ADP + phosphate + H(+). It functions in the pathway cell wall biogenesis; peptidoglycan biosynthesis. Its function is as follows. Cell wall formation. Catalyzes the addition of glutamate to the nucleotide precursor UDP-N-acetylmuramoyl-L-alanine (UMA). The sequence is that of UDP-N-acetylmuramoylalanine--D-glutamate ligase from Blochmanniella pennsylvanica (strain BPEN).